The following is a 297-amino-acid chain: Bifunctional protein FolD (297 aa).

NADP(+) contacts are provided by residues 164–166, serine 193, and valine 234; that span reads GRS.

This sequence belongs to the tetrahydrofolate dehydrogenase/cyclohydrolase family. Homodimer.

The catalysed reaction is (6R)-5,10-methylene-5,6,7,8-tetrahydrofolate + NADP(+) = (6R)-5,10-methenyltetrahydrofolate + NADPH. It carries out the reaction (6R)-5,10-methenyltetrahydrofolate + H2O = (6R)-10-formyltetrahydrofolate + H(+). It participates in one-carbon metabolism; tetrahydrofolate interconversion. Functionally, catalyzes the oxidation of 5,10-methylenetetrahydrofolate to 5,10-methenyltetrahydrofolate and then the hydrolysis of 5,10-methenyltetrahydrofolate to 10-formyltetrahydrofolate. The chain is Bifunctional protein FolD from Natronomonas pharaonis (strain ATCC 35678 / DSM 2160 / CIP 103997 / JCM 8858 / NBRC 14720 / NCIMB 2260 / Gabara) (Halobacterium pharaonis).